The primary structure comprises 768 residues: P-selectin (768 aa).

The N-terminal stretch at 1 to 41 is a signal peptide; sequence MAGCPKGSWTPRLRSVILGGAQLIWFSALISELVNQKEVAA. Residues 42-709 lie on the Extracellular side of the membrane; it reads WTYNYSTKAY…QAGTLTIQEA (668 aa). The C-type lectin domain occupies 58 to 158; the sequence is VFCRRHFTDL…PCFKRKRALC (101 aa). 21 cysteine pairs are disulfide-bonded: C60-C158, C131-C150, C163-C174, C168-C183, C185-C194, C200-C244, C230-C257, C262-C306, C292-C319, C324-C368, C354-C381, C386-C430, C416-C443, C448-C492, C478-C505, C510-C554, C540-C567, C580-C624, C610-C637, C642-C686, and C672-C699. E121, N123, and N124 together coordinate Ca(2+). N123 contacts a carbohydrate. The a carbohydrate site is built by E133 and N146. Positions 146 and 147 each coordinate Ca(2+). The 37-residue stretch at 159 to 195 folds into the EGF-like domain; the sequence is YTASCQDMSCSNQGECIETIGSYTCSCYPGFYGPECE. Sushi domains are found at residues 198–259, 260–321, 322–383, 384–445, 446–507, 508–569, 578–639, and 640–701; these read KECG…KCDA, VQCQ…TCEA, IACE…FCEA, LQCP…ECQA, VSCA…TCEA, IKCP…TCKG, VRCP…MCRA, and VKCS…TCQA. An N-linked (GlcNAc...) asparagine glycan is attached at N398. An N-linked (GlcNAc...) asparagine glycan is attached at N603. 3 N-linked (GlcNAc...) asparagine glycosylation sites follow: N654, N661, and N679. Residues 710–733 traverse the membrane as a helical segment; that stretch reads LTYLGGAVASTTGLAVGGTLLALL. The Cytoplasmic portion of the chain corresponds to 734–768; that stretch reads RKRLRKKDDGKCPLNPHSHLGTYGVFTNAAYDPTP. C745 is lipidated: S-palmitoyl cysteine; alternate. C745 is lipidated: S-stearoyl cysteine; alternate. Residues 756-759 carry the Endocytosis signal motif; sequence YGVF. Residues 759–768 are interaction with SNX17; the sequence is FTNAAYDPTP.

It belongs to the selectin/LECAM family. Interacts with SNX17. Interacts with SELPLG/PSGL1 and PODXL2 and mediates neutrophil adhesion and leukocyte rolling. This interaction requires the sialyl-Lewis X epitope of SELPLG and PODXL2, and specific tyrosine sulfation on SELPLG. Interacts (via C-type lectin domain) with alpha-IIb/beta3 integrin ITGA2B:ITGB3 and alpha-V/beta-3 integrin ITGAV:ITGB3. Interacts with alpha5/beta1 integrin ITGA5:ITGB1 and alpha4/beta1 integrin ITGA4:ITGB. In terms of tissue distribution, stored in the alpha-granules of platelets and Weibel-Palade bodies of endothelial cells. Upon cell activation by agonists, P-selectin is transported rapidly to the cell surface.

The protein localises to the cell membrane. Its function is as follows. Ca(2+)-dependent receptor for myeloid cells that binds to carbohydrates on neutrophils and monocytes. Mediates the interaction of activated endothelial cells or platelets with leukocytes. The ligand recognized is sialyl-Lewis X. Mediates rapid rolling of leukocyte rolling over vascular surfaces during the initial steps in inflammation through interaction with SELPLG. Mediates cell-cell interactions and cell adhesion via the interaction with integrin alpha-IIb/beta3 (ITGA2B:ITGB3) and integrin alpha-V/beta-3 (ITGAV:ITGB3). This chain is P-selectin (Selp), found in Mus musculus (Mouse).